A 284-amino-acid chain; its full sequence is Bifunctional protein FolD (284 aa).

NADP(+)-binding positions include 165–167 (GAS), Ser-190, and Ile-231.

It belongs to the tetrahydrofolate dehydrogenase/cyclohydrolase family. Homodimer.

It carries out the reaction (6R)-5,10-methylene-5,6,7,8-tetrahydrofolate + NADP(+) = (6R)-5,10-methenyltetrahydrofolate + NADPH. The catalysed reaction is (6R)-5,10-methenyltetrahydrofolate + H2O = (6R)-10-formyltetrahydrofolate + H(+). Its pathway is one-carbon metabolism; tetrahydrofolate interconversion. Functionally, catalyzes the oxidation of 5,10-methylenetetrahydrofolate to 5,10-methenyltetrahydrofolate and then the hydrolysis of 5,10-methenyltetrahydrofolate to 10-formyltetrahydrofolate. This is Bifunctional protein FolD from Polynucleobacter asymbioticus (strain DSM 18221 / CIP 109841 / QLW-P1DMWA-1) (Polynucleobacter necessarius subsp. asymbioticus).